A 325-amino-acid chain; its full sequence is Neisseria adhesin A (325 aa).

The N-terminal stretch at 1 to 23 (MKHFQSKVLTAAILAALSGSAMA) is a signal peptide. A head domain region spans residues 24–137 (DNPPPSTDEI…NTAAIGENKA (114 aa)). Residues 86 to 135 (LKEVLAQHDQSLADLTGTVDENSEALVKTAEVVNDISADVKANTAAIGEN) are a coiled coil. A coiled stalk domain region spans residues 139–231 (IAKKADQTAL…LASAEKSITE (93 aa)). Positions 232–270 (HGTRLNGLDRTVSDLRKETRQGLAEQAALSGLFQPYNVG) are outer membrane translocation of the passenger domain. A run of 4 beta stranded transmembrane segments spans residues 270–280 (GRFNVTAAVGG), 284–295 (ESAVAIGTGFRF), 302–308 (KAGVAVG), and 314–325 (SAAYHVGVNYEW). Residues 271-325 (RFNVTAAVGGYKSESAVAIGTGFRFTENFAAKAGVAVGTSSGSSAAYHVGVNYEW) are translocator domain.

The protein belongs to the autotransporter-2 (AT-2) (TC 1.B.40) family. In terms of assembly, homotrimer.

Its subcellular location is the cell surface. The protein resides in the cell outer membrane. An antigenic bacterial cell surface protein that adheres to and induces bacterial uptake by human epithelial cells. This chain is Neisseria adhesin A, found in Neisseria meningitidis serogroup B.